We begin with the raw amino-acid sequence, 637 residues long: tRNA 5-methylaminomethyl-2-thiouridine biosynthesis bifunctional protein MnmC (637 aa).

The segment at 1 to 20 (MSERIEWLEDGTAGGSPYSP) is disordered. The tract at residues 1 to 232 (MSERIEWLED…KRDNLQGEYQ (232 aa)) is tRNA (mnm(5)s(2)U34)-methyltransferase. The FAD-dependent cmnm(5)s(2)U34 oxidoreductase stretch occupies residues 255-637 (IGAGLAGSAV…YATRLQPSGS (383 aa)).

In the N-terminal section; belongs to the methyltransferase superfamily. tRNA (mnm(5)s(2)U34)-methyltransferase family. This sequence in the C-terminal section; belongs to the DAO family. The cofactor is FAD.

The protein resides in the cytoplasm. The catalysed reaction is 5-aminomethyl-2-thiouridine(34) in tRNA + S-adenosyl-L-methionine = 5-methylaminomethyl-2-thiouridine(34) in tRNA + S-adenosyl-L-homocysteine + H(+). In terms of biological role, catalyzes the last two steps in the biosynthesis of 5-methylaminomethyl-2-thiouridine (mnm(5)s(2)U) at the wobble position (U34) in tRNA. Catalyzes the FAD-dependent demodification of cmnm(5)s(2)U34 to nm(5)s(2)U34, followed by the transfer of a methyl group from S-adenosyl-L-methionine to nm(5)s(2)U34, to form mnm(5)s(2)U34. The chain is tRNA 5-methylaminomethyl-2-thiouridine biosynthesis bifunctional protein MnmC from Polaromonas naphthalenivorans (strain CJ2).